The primary structure comprises 438 residues: Glycerol-3-phosphate acyltransferase 3 (438 aa).

A helical transmembrane segment spans residues 14 to 34; the sequence is WLTLVGGLILLPSAFGLSLGI. Phosphoserine occurs at positions 68 and 77. A run of 2 helical transmembrane segments spans residues 137-157 and 161-181; these read ISPRLTMVWVLGVLVRYCFLL and VTLAFIGISLLIIGTTLVGQL. Residues 229–234 carry the HXXXXD motif motif; the sequence is HTSPID.

Belongs to the 1-acyl-sn-glycerol-3-phosphate acyltransferase family. As to expression, most abundant in epididymal fat, followed by small intestine, brown adipose tissue, kidney, heart and colon.

The protein resides in the endoplasmic reticulum membrane. It carries out the reaction sn-glycerol 3-phosphate + an acyl-CoA = a 1-acyl-sn-glycero-3-phosphate + CoA. The catalysed reaction is a 1-acyl-sn-glycero-3-phosphate + an acyl-CoA = a 1,2-diacyl-sn-glycero-3-phosphate + CoA. It catalyses the reaction dodecanoyl-CoA + sn-glycerol 3-phosphate = 1-dodecanoyl-sn-glycerol 3-phosphate + CoA. The enzyme catalyses sn-glycerol 3-phosphate + hexadecanoyl-CoA = 1-hexadecanoyl-sn-glycero-3-phosphate + CoA. It carries out the reaction sn-glycerol 3-phosphate + (9Z)-octadecenoyl-CoA = 1-(9Z-octadecenoyl)-sn-glycero-3-phosphate + CoA. The catalysed reaction is (9Z,12Z)-octadecadienoyl-CoA + sn-glycerol 3-phosphate = 1-(9Z,12Z)-octadecadienoyl-sn-glycero-3-phosphate + CoA. It catalyses the reaction 1-tetradecanoyl-sn-glycerol 3-phosphate + (9Z)-octadecenoyl-CoA = 1-tetradecanoyl-2-(9Z)-octadecenoyl-sn-glycero-3-phosphate + CoA. The enzyme catalyses 1-hexadecanoyl-sn-glycero-3-phosphate + (9Z)-octadecenoyl-CoA = 1-hexadecanoyl-2-(9Z-octadecenoyl)-sn-glycero-3-phosphate + CoA. It carries out the reaction 1-(9Z-octadecenoyl)-sn-glycero-3-phosphate + (9Z)-octadecenoyl-CoA = 1,2-di-(9Z-octadecenoyl)-sn-glycero-3-phosphate + CoA. The catalysed reaction is 1-(6Z,9Z,12Z-octadecatrienoyl)-sn-glycero-3-phosphate + (9Z)-octadecenoyl-CoA = (6Z,9Z,12Z)-octadecatrienoyl-2-(9Z)-octadecenoyl-sn-glycero-3-phosphate + CoA. It catalyses the reaction 1-(9Z,12Z,15Z)-octadecatrienoyl-sn-glycero-3-phosphate + (9Z)-octadecenoyl-CoA = 1-(9Z,12Z,15Z)-octadecatrienoyl-2-(9Z)-octadecenoyl-sn-glycero-3-phosphate + CoA. The enzyme catalyses 1-(9Z-octadecenoyl)-sn-glycero-3-phosphate + tetradecanoyl-CoA = 1-(9Z)-octadecenoyl-2-tetradecanoyl-sn-glycero-3-phosphate + CoA. It carries out the reaction 1-(9Z-octadecenoyl)-sn-glycero-3-phosphate + hexadecanoyl-CoA = 1-(9Z)-octadecenoyl-2-hexadecanoyl-sn-glycero-3-phosphate + CoA. The catalysed reaction is 1-(9Z-octadecenoyl)-sn-glycero-3-phosphate + octadecanoyl-CoA = 1-(9Z-octadecenoyl)-2-octadecanoyl-sn-glycero-3-phosphate + CoA. It catalyses the reaction 1-(9Z-octadecenoyl)-sn-glycero-3-phosphate + (9Z,12Z)-octadecadienoyl-CoA = 1-(9Z)-octadecenoyl-2-(9Z,12Z)-octadecadienoyl-sn-glycero-3-phosphate + CoA. The enzyme catalyses 1-(5Z,8Z,11Z,14Z-eicosatetraenoyl)-sn-glycero-3-phosphate + (9Z)-octadecenoyl-CoA = 1-(5Z,8Z,11Z,14Z)-eicosatetraenoyl-2-(9Z)-octadecenoyl-sn-glycero-3-phosphate + CoA. It functions in the pathway glycerolipid metabolism; triacylglycerol biosynthesis. The protein operates within phospholipid metabolism; CDP-diacylglycerol biosynthesis; CDP-diacylglycerol from sn-glycerol 3-phosphate: step 1/3. Functionally, converts glycerol-3-phosphate to 1-acyl-sn-glycerol-3-phosphate (lysophosphatidic acid or LPA) by incorporating an acyl moiety at the sn-1 position of the glycerol backbone. Also converts LPA into 1,2-diacyl-sn-glycerol-3-phosphate (phosphatidic acid or PA) by incorporating an acyl moiety at the sn-2 position of the glycerol backbone. Protects cells against lipotoxicity. The chain is Glycerol-3-phosphate acyltransferase 3 from Mus musculus (Mouse).